The chain runs to 403 residues: MKISTLPQEFMQAQPILEHIESAGFEAYFVGGAVRDMLLNKPIHDVDIATSAFPEEIKALFTKTVDTGIQHGTVMVLDHGDGYEITTFRTESTYTDFRRPDKVTFVRSLAEDLKRRDFTINAIAMTKDGDIIDLFDGLTDMAQKRIRAVGDAEVRFNEDALRIMRALRFSAQLGFDIAPHTKAALKQIGRNLEKIAVERIRVEFEKLLMGQYASNSLSVAIEADLIRYLPGHIKKEDWLTITADLKRNQPQARTVIWPYFLSRLSLRLNELQLFMRSWKTSREDMRAVLSIVPIVKHVQTVSVFELYAIYDYQALLFEVLTLIGTPLATQQRVKQIFDALPITHNRDMCISGGDLLANNIVTPGPQMGRILTQLEHAVIQRIISNRPDSLLEYAKELVDNEKN.

2 residues coordinate ATP: Gly-32 and Arg-35. Gly-32 and Arg-35 together coordinate CTP. Mg(2+) contacts are provided by Asp-45 and Asp-47. Residues Arg-116, Asp-159, Arg-162, Arg-165, and Arg-168 each contribute to the ATP site. CTP-binding residues include Arg-116, Asp-159, Arg-162, Arg-165, and Arg-168.

It belongs to the tRNA nucleotidyltransferase/poly(A) polymerase family. Bacterial CCA-adding enzyme type 3 subfamily. Homodimer. Mg(2+) serves as cofactor.

It catalyses the reaction a tRNA precursor + 2 CTP + ATP = a tRNA with a 3' CCA end + 3 diphosphate. The enzyme catalyses a tRNA with a 3' CCA end + 2 CTP + ATP = a tRNA with a 3' CCACCA end + 3 diphosphate. Functionally, catalyzes the addition and repair of the essential 3'-terminal CCA sequence in tRNAs without using a nucleic acid template. Adds these three nucleotides in the order of C, C, and A to the tRNA nucleotide-73, using CTP and ATP as substrates and producing inorganic pyrophosphate. tRNA 3'-terminal CCA addition is required both for tRNA processing and repair. Also involved in tRNA surveillance by mediating tandem CCA addition to generate a CCACCA at the 3' terminus of unstable tRNAs. While stable tRNAs receive only 3'-terminal CCA, unstable tRNAs are marked with CCACCA and rapidly degraded. In Leuconostoc citreum (strain KM20), this protein is CCA-adding enzyme.